A 71-amino-acid chain; its full sequence is uncharacterized protein (71 aa).

Residues 5-22 (VVMCSGLFCSVFAGAFML) form a helical membrane-spanning segment.

The protein localises to the membrane. This is an uncharacterized protein from Bacillus subtilis (strain 168).